A 345-amino-acid chain; its full sequence is MWLLGPLCLLLSSAAESQLLPGNNFTNECNIPGNFMCSNGRCIPGAWQCDGLPDCFDKSDEKECPKAKSKCGPTFFPCASGIHCIIGRFRCNGFEDCPDGSDEENCTANPLLCSTARYHCKNGLCIDKSFICDGQNNCQDNSDEESCESSQEPGSGQVFVTSENQLVYYPSITYAIIGSSVIFVLVVALLALVLHHQRKRNNLMTLPVHRLQHPVLLSRLVVLDHPHHCNVTYNVNNGIQYVASQAEQNASEVGSPPSYSEALLDQRPAWYDLPPPPYSSDTESLNQADLPPYRSRSGSANSASSQAASSLLSVEDTSHSPGQPGPQEGTAEPRDSEPSQGTEEV.

Residues 1–17 (MWLLGPLCLLLSSAAES) form the signal peptide. Topologically, residues 18–173 (QLLPGNNFTN…NQLVYYPSIT (156 aa)) are extracellular. A glycan (N-linked (GlcNAc...) asparagine) is linked at Asn-24. 3 consecutive LDL-receptor class A domains span residues 28–65 (ECNI…KECP), 70–107 (KCGP…ENCT), and 112–148 (LCST…ESCE). Intrachain disulfides connect Cys-29-Cys-42, Cys-37-Cys-55, Cys-49-Cys-64, Cys-71-Cys-84, Cys-78-Cys-97, Cys-91-Cys-106, Cys-113-Cys-125, Cys-120-Cys-138, and Cys-132-Cys-147. Residues 30 to 57 (NIPGNFMCSNGRCIPGAWQCDGLPDCFD) form a (Microbial infection) Interaction with Venezuelan equine encephalitis virus/VEEV spike proteins E1 and E2 region. Residues 174–194 (YAIIGSSVIFVLVVALLALVL) traverse the membrane as a helical segment. Residues 195-345 (HHQRKRNNLM…SEPSQGTEEV (151 aa)) lie on the Cytoplasmic side of the membrane. Short sequence motifs (involved in ITCH interaction) lie at residues 256 to 259 (PPSY) and 275 to 278 (PPPY). The disordered stretch occupies residues 270–345 (WYDLPPPPYS…SEPSQGTEEV (76 aa)). Residues 295-313 (SRSGSANSASSQAASSLLS) show a composition bias toward low complexity.

The protein belongs to the LDLR family. Interacts with APP precursor C-terminus. Interacts directly with ITCH; this interaction promotes ITCH auto-ubiquitination leading to its degradation. Interacts directly with NEDD4; this interaction promotes NEDD4 auto-ubiquitination. Interacts directly with NEDD4L. In terms of assembly, (Microbial infection) Interacts (via domain LDL-receptor class A 1) with Venezuelan equine encephalitis virus/VEEV spike proteins E1 and E2. Expressed at high levels in brain, lung, skeletal muscle, and pancreas. Expressed at moderate levels in heart, placenta, and kidney but not detected in the liver.

The protein resides in the cell membrane. Its function is as follows. May influence APP processing, resulting in a decrease in sAPP-alpha production and increased amyloidogenic P3 peptide production. May regulate ITCH and NEDD4 E3 ligase activity and degradation. (Microbial infection) Acts as a receptor for Venezuelan equine encephalitis virus. The chain is Low-density lipoprotein receptor class A domain-containing protein 3 from Homo sapiens (Human).